The sequence spans 294 residues: Large ribosomal subunit protein uL18B (294 aa).

It belongs to the universal ribosomal protein uL18 family. In terms of assembly, component of the large ribosomal subunit (LSU). Mature yeast ribosomes consist of a small (40S) and a large (60S) subunit. The 40S small subunit contains 1 molecule of ribosomal RNA (18S rRNA) and 33 different proteins (encoded by 57 genes). The large 60S subunit contains 3 rRNA molecules (25S, 5.8S and 5S rRNA) and 46 different proteins (encoded by 81 genes). Component of a hexameric 5S RNP precursor complex, composed of 5S RNA, rrs1, rpf2, rpl5a/rpl5b, rpl11a/rpl11b and syo1; this complex acts as a precursor for ribosome assembly. rpl5a/rpl5b/uL18 forms a heterotrimeric complex with syo1 and rpl11a/rpl11b/uL5. Interaction of this complex with KAP104 allows the nuclear import of the heterotrimer.

The protein resides in the cytoplasm. It localises to the nucleus. Its function is as follows. Component of the ribosome, a large ribonucleoprotein complex responsible for the synthesis of proteins in the cell. The small ribosomal subunit (SSU) binds messenger RNAs (mRNAs) and translates the encoded message by selecting cognate aminoacyl-transfer RNA (tRNA) molecules. The large subunit (LSU) contains the ribosomal catalytic site termed the peptidyl transferase center (PTC), which catalyzes the formation of peptide bonds, thereby polymerizing the amino acids delivered by tRNAs into a polypeptide chain. The nascent polypeptides leave the ribosome through a tunnel in the LSU and interact with protein factors that function in enzymatic processing, targeting, and the membrane insertion of nascent chains at the exit of the ribosomal tunnel. The protein is Large ribosomal subunit protein uL18B (rpl502) of Schizosaccharomyces pombe (strain 972 / ATCC 24843) (Fission yeast).